A 496-amino-acid chain; its full sequence is Cobyric acid synthase (496 aa).

The region spanning 256 to 444 (KINIAVVLLR…IHGILDNQAF (189 aa)) is the GATase cobBQ-type domain. Cysteine 337 (nucleophile) is an active-site residue. Histidine 436 is a catalytic residue.

The protein belongs to the CobB/CobQ family. CobQ subfamily.

It functions in the pathway cofactor biosynthesis; adenosylcobalamin biosynthesis. Functionally, catalyzes amidations at positions B, D, E, and G on adenosylcobyrinic A,C-diamide. NH(2) groups are provided by glutamine, and one molecule of ATP is hydrogenolyzed for each amidation. This chain is Cobyric acid synthase, found in Phocaeicola vulgatus (strain ATCC 8482 / DSM 1447 / JCM 5826 / CCUG 4940 / NBRC 14291 / NCTC 11154) (Bacteroides vulgatus).